The following is a 368-amino-acid chain: Alanine racemase (368 aa).

The active-site Proton acceptor; specific for D-alanine is the lysine 34. Position 34 is an N6-(pyridoxal phosphate)lysine (lysine 34). Arginine 132 is a substrate binding site. Tyrosine 261 acts as the Proton acceptor; specific for L-alanine in catalysis. Methionine 309 serves as a coordination point for substrate.

This sequence belongs to the alanine racemase family. The cofactor is pyridoxal 5'-phosphate.

The catalysed reaction is L-alanine = D-alanine. It functions in the pathway amino-acid biosynthesis; D-alanine biosynthesis; D-alanine from L-alanine: step 1/1. In terms of biological role, catalyzes the interconversion of L-alanine and D-alanine. May also act on other amino acids. This chain is Alanine racemase (alr), found in Carboxydothermus hydrogenoformans (strain ATCC BAA-161 / DSM 6008 / Z-2901).